A 151-amino-acid polypeptide reads, in one-letter code: Large ribosomal subunit protein bL9 (151 aa).

It belongs to the bacterial ribosomal protein bL9 family.

In terms of biological role, binds to the 23S rRNA. This is Large ribosomal subunit protein bL9 from Bordetella petrii (strain ATCC BAA-461 / DSM 12804 / CCUG 43448).